The following is an 881-amino-acid chain: Translation initiation factor IF-2 (881 aa).

Disordered stretches follow at residues 31-147 and 165-291; these read KLAQ…TKVP and SVVG…HYDE. A compositionally biased stretch (basic and acidic residues) spans 42-55; the sequence is NSSEKPSAKVAEKV. Over residues 68-77 the composition is skewed to polar residues; the sequence is ATPESVSSET. Residues 114-128 show a composition bias toward acidic residues; sequence VEEEIASSTDSEPEV. The span at 191-203 shows a compositional bias: basic and acidic residues; the sequence is PKKEDKPAPKERS. Residues 204-233 are compositionally biased toward polar residues; that stretch reads GQAQAKPQQSSEASSENKPHSPNNNRSSQP. Over residues 235-267 the composition is skewed to basic and acidic residues; that stretch reads YRRDTSKKPGSDFRDRAKKDDNPKAFTGRDRYG. Over residues 278–287 the composition is skewed to basic residues; sequence RKKRVQKTKK. The tr-type G domain maps to 387 to 556; it reads IRPPIVAFMG…ALQAEVLELK (170 aa). Residues 396-403 are G1; the sequence is GHVDHGKT. 396 to 403 contributes to the GTP binding site; the sequence is GHVDHGKT. Positions 421–425 are G2; it reads AITQH. Residues 442–445 are G3; it reads DTPG. Residues 442 to 446 and 496 to 499 contribute to the GTP site; these read DTPGH and NKCD. Residues 496–499 are G4; sequence NKCD. The G5 stretch occupies residues 532–534; that stretch reads SAK.

Belongs to the TRAFAC class translation factor GTPase superfamily. Classic translation factor GTPase family. IF-2 subfamily.

It localises to the cytoplasm. Its function is as follows. One of the essential components for the initiation of protein synthesis. Protects formylmethionyl-tRNA from spontaneous hydrolysis and promotes its binding to the 30S ribosomal subunits. Also involved in the hydrolysis of GTP during the formation of the 70S ribosomal complex. The polypeptide is Translation initiation factor IF-2 (Chlamydia felis (strain Fe/C-56) (Chlamydophila felis)).